The chain runs to 401 residues: NADH-quinone oxidoreductase subunit D 2 (401 aa).

It belongs to the complex I 49 kDa subunit family. In terms of assembly, NDH-1 is composed of 14 different subunits. Subunits NuoB, C, D, E, F, and G constitute the peripheral sector of the complex.

Its subcellular location is the cell inner membrane. The enzyme catalyses a quinone + NADH + 5 H(+)(in) = a quinol + NAD(+) + 4 H(+)(out). In terms of biological role, NDH-1 shuttles electrons from NADH, via FMN and iron-sulfur (Fe-S) centers, to quinones in the respiratory chain. The immediate electron acceptor for the enzyme in this species is believed to be ubiquinone. Couples the redox reaction to proton translocation (for every two electrons transferred, four hydrogen ions are translocated across the cytoplasmic membrane), and thus conserves the redox energy in a proton gradient. This Koribacter versatilis (strain Ellin345) protein is NADH-quinone oxidoreductase subunit D 2.